The sequence spans 362 residues: Peptide chain release factor 1 (362 aa).

Gln-237 carries the post-translational modification N5-methylglutamine. A disordered region spans residues 289–308; the sequence is AAEISDTRRNLLGSGDRSDR.

It belongs to the prokaryotic/mitochondrial release factor family. Post-translationally, methylated by PrmC. Methylation increases the termination efficiency of RF1.

Its subcellular location is the cytoplasm. In terms of biological role, peptide chain release factor 1 directs the termination of translation in response to the peptide chain termination codons UAG and UAA. The protein is Peptide chain release factor 1 of Vibrio cholerae serotype O1 (strain ATCC 39541 / Classical Ogawa 395 / O395).